Reading from the N-terminus, the 201-residue chain is LexA repressor 1 (201 aa).

A DNA-binding region (H-T-H motif) is located at residues 27-47; the sequence is LAEIAQAFGFASRNAAQKHVQ. Active-site for autocatalytic cleavage activity residues include Ser122 and Lys159.

This sequence belongs to the peptidase S24 family. As to quaternary structure, homodimer.

It carries out the reaction Hydrolysis of Ala-|-Gly bond in repressor LexA.. Represses a number of genes involved in the response to DNA damage (SOS response), including recA and lexA. In the presence of single-stranded DNA, RecA interacts with LexA causing an autocatalytic cleavage which disrupts the DNA-binding part of LexA, leading to derepression of the SOS regulon and eventually DNA repair. In Xanthomonas oryzae pv. oryzae (strain KACC10331 / KXO85), this protein is LexA repressor 1.